We begin with the raw amino-acid sequence, 485 residues long: Glutamyl-tRNA(Gln) amidotransferase subunit A (485 aa).

Active-site charge relay system residues include K78 and S153. Catalysis depends on S177, which acts as the Acyl-ester intermediate.

This sequence belongs to the amidase family. GatA subfamily. As to quaternary structure, heterotrimer of A, B and C subunits.

It carries out the reaction L-glutamyl-tRNA(Gln) + L-glutamine + ATP + H2O = L-glutaminyl-tRNA(Gln) + L-glutamate + ADP + phosphate + H(+). In terms of biological role, allows the formation of correctly charged Gln-tRNA(Gln) through the transamidation of misacylated Glu-tRNA(Gln) in organisms which lack glutaminyl-tRNA synthetase. The reaction takes place in the presence of glutamine and ATP through an activated gamma-phospho-Glu-tRNA(Gln). The sequence is that of Glutamyl-tRNA(Gln) amidotransferase subunit A from Geobacter metallireducens (strain ATCC 53774 / DSM 7210 / GS-15).